We begin with the raw amino-acid sequence, 246 residues long: tRNA (guanine-N(1)-)-methyltransferase (246 aa).

S-adenosyl-L-methionine is bound by residues Gly113 and 133 to 138 (IGDYVL).

Belongs to the RNA methyltransferase TrmD family. In terms of assembly, homodimer.

The protein resides in the cytoplasm. It carries out the reaction guanosine(37) in tRNA + S-adenosyl-L-methionine = N(1)-methylguanosine(37) in tRNA + S-adenosyl-L-homocysteine + H(+). Functionally, specifically methylates guanosine-37 in various tRNAs. The chain is tRNA (guanine-N(1)-)-methyltransferase from Haemophilus influenzae (strain PittEE).